The chain runs to 224 residues: Cytidylate kinase (224 aa).

12-20 lines the ATP pocket; sequence GPSGAGKGT.

It belongs to the cytidylate kinase family. Type 1 subfamily.

Its subcellular location is the cytoplasm. It catalyses the reaction CMP + ATP = CDP + ADP. It carries out the reaction dCMP + ATP = dCDP + ADP. The chain is Cytidylate kinase from Aliivibrio salmonicida (strain LFI1238) (Vibrio salmonicida (strain LFI1238)).